Consider the following 941-residue polypeptide: Endoglucanase (941 aa).

An N-terminal signal peptide occupies residues 1 to 29 (MKIKQIKQSLSLLLIITLIMSLFVPMASA). 3 consecutive SLH domains span residues 37 to 94 (NAFP…GLEA), 95 to 158 (SSKD…LSLP), and 161 to 224 (QREY…DYLY). Glutamate 373 serves as the catalytic Proton donor. The active-site Nucleophile is glutamate 485.

This sequence belongs to the glycosyl hydrolase 5 (cellulase A) family.

It catalyses the reaction Endohydrolysis of (1-&gt;4)-beta-D-glucosidic linkages in cellulose, lichenin and cereal beta-D-glucans.. The protein is Endoglucanase of Bacillus sp. (strain KSM-635).